A 120-amino-acid polypeptide reads, in one-letter code: U15-barytoxin-Tl1c (120 aa).

A signal peptide spans 1–16 (MKLFMVLVASFAFAVA). Cystine bridges form between Cys55/Cys73, Cys66/Cys79, Cys70/Cys118, and Cys72/Cys89.

It belongs to the neurotoxin 03 (Tx2) family. 03 subfamily. As to expression, expressed by the venom gland.

Its subcellular location is the secreted. Ion channel inhibitor. The protein is U15-barytoxin-Tl1c of Trittame loki (Brush-footed trapdoor spider).